The chain runs to 520 residues: MLPFRTLLKWSVNRNCCRGFAVSQQNYNSVKKGLVLGVYEKEKEEESLTLTNAGDAVDNAVLGKLRDQLARSGPSLKKGKSRIFYGLHEDFPSIVVVGLGKKSAGVNQHELWNEAKENIRAAVSVGCRQMQDMEIVQVEVDPCGDAQAAAEGAVLGLFEYNEMKKKKKKAVTTHLHGSSEITAWEKGVLYAEGQNLARHLMEAPANYITPTKFAETFEQRLANMGSNVKVFTRSKQWIEEQQMGAFLSVAKGSEEPPVFLEIHYSGSSDASQPPLVFVGKGVTFDSGGISLKPSSGMDAMRGDMGGAATVCSAITTAAKLKLPINIISLAPLCENMPNGRANKPGDVVKAKNGKTIQVDNTDAEGRLLLADALCYAHSFNPRAIVNAATLTGAMDVALGSAAAGVFTNSSWLWTHLQEASVVTGDRVWRMPLFEHYSKQVTESALADLNNIGKYSRSGGACTAAAFLKEFVTAPHWAHLDIAGVMSNKDEVPYLRKGMSGRPTRTLIEFAARLSEDKQTI.

Zn(2+) contacts are provided by Leu200, Met201, Lys280, and Asp285. Substrate-binding residues include Lys280, Asp285, Ser290, and Lys292. Position 285 (Asp285) interacts with Mg(2+). Lys292 is an active-site residue. Residues Arg301, Asp303, Asp362, and Glu364 each coordinate Zn(2+). Substrate-binding residues include Asp303 and Asp362. Mg(2+)-binding residues include Asp362 and Glu364. Arg366 is an active-site residue.

It belongs to the peptidase M17 family. Homohexamer. Zn(2+) serves as cofactor. Mn(2+) is required as a cofactor.

The protein resides in the cytoplasm. It catalyses the reaction Release of an N-terminal amino acid, Xaa-|-Yaa-, in which Xaa is preferably Leu, but may be other amino acids including Pro although not Arg or Lys, and Yaa may be Pro. Amino acid amides and methyl esters are also readily hydrolyzed, but rates on arylamides are exceedingly low.. It carries out the reaction an S-substituted L-cysteinylglycine + H2O = an S-substituted L-cysteine + glycine. The catalysed reaction is L-cysteinylglycine + H2O = L-cysteine + glycine. The enzyme catalyses S-benzyl-L-cysteinylglycine + H2O = S-benzyl-L-cysteine + glycine. It catalyses the reaction Release of N-terminal proline from a peptide.. Functionally, cytosolic metallopeptidase that catalyzes the removal of unsubstituted N-terminal hydrophobic amino acids from various peptides. The presence of Zn(2+) ions is essential for the peptidase activity, and the association with other cofactors can modulate the substrate spectificity of the enzyme. For instance, in the presence of Mn(2+), it displays a specific Cys-Gly hydrolyzing activity of Cys-Gly-S-conjugates. Involved in the metabolism of glutathione and in the degradation of glutathione S-conjugates, which may play a role in the control of the cell redox status. This is Cytosol aminopeptidase (lap3) from Xenopus tropicalis (Western clawed frog).